The following is a 437-amino-acid chain: GTPase Obg (437 aa).

Residues 2–160 (SMFLDTAKIK…RNLELELKVL (159 aa)) enclose the Obg domain. The OBG-type G domain occupies 161–338 (ADVGLVGFPS…LLEATAELLE (178 aa)). Residues 167–174 (GFPSVGKS), 192–196 (FTTIV), 214–217 (DLPG), 284–287 (NKMD), and 319–321 (SGI) each bind GTP. Mg(2+)-binding residues include Ser-174 and Thr-194. An OCT domain is found at 359 to 437 (GFNPDEPEFA…IGKFEFEFVD (79 aa)).

Belongs to the TRAFAC class OBG-HflX-like GTPase superfamily. OBG GTPase family. In terms of assembly, monomer. Requires Mg(2+) as cofactor.

It localises to the cytoplasm. An essential GTPase which binds GTP, GDP and possibly (p)ppGpp with moderate affinity, with high nucleotide exchange rates and a fairly low GTP hydrolysis rate. Plays a role in control of the cell cycle, stress response, ribosome biogenesis and in those bacteria that undergo differentiation, in morphogenesis control. This chain is GTPase Obg, found in Streptococcus suis (strain 05ZYH33).